We begin with the raw amino-acid sequence, 451 residues long: UDP-N-acetylmuramoylalanine--D-glutamate ligase (451 aa).

118–124 (GTKGKST) contacts ATP.

It belongs to the MurCDEF family.

Its subcellular location is the cytoplasm. The enzyme catalyses UDP-N-acetyl-alpha-D-muramoyl-L-alanine + D-glutamate + ATP = UDP-N-acetyl-alpha-D-muramoyl-L-alanyl-D-glutamate + ADP + phosphate + H(+). Its pathway is cell wall biogenesis; peptidoglycan biosynthesis. Its function is as follows. Cell wall formation. Catalyzes the addition of glutamate to the nucleotide precursor UDP-N-acetylmuramoyl-L-alanine (UMA). This Borreliella burgdorferi (strain ATCC 35210 / DSM 4680 / CIP 102532 / B31) (Borrelia burgdorferi) protein is UDP-N-acetylmuramoylalanine--D-glutamate ligase (murD).